Consider the following 790-residue polypeptide: PGC-1 and ERR-induced regulator in muscle protein 1 (790 aa).

Disordered regions lie at residues 38 to 391 (LLSS…TPIS), 425 to 449 (VASS…STPV), 507 to 545 (SVAG…EAVA), and 626 to 648 (QRSR…APIP). The span at 40 to 52 (SSDIDQGDSSGSS) shows a compositional bias: low complexity. 2 stretches are compositionally biased toward polar residues: residues 80–89 (ATQQPVSRSQ) and 98–107 (TGQQTPSTSA). The segment covering 111–123 (APPSLGPGASPPS) has biased composition (low complexity). The segment covering 146-157 (APRPPGEPPGSP) has biased composition (pro residues). A compositionally biased stretch (low complexity) spans 158 to 169 (KSPGHSTGSQRP). Over residues 170 to 179 (PDSPGAPPRS) the composition is skewed to pro residues. The span at 366–391 (KPQSDTAVSTPASEPQSSVALSTPIS) shows a compositional bias: polar residues. Residues 515 to 532 (KPGSGQASARPSAPQTAT) are compositionally biased toward polar residues. Residues 635-648 (EPLPRADPVPAPIP) show a composition bias toward pro residues.

In terms of tissue distribution, muscle-specific expression is increased by endurance exercise.

The protein localises to the cytoplasm. Its subcellular location is the nucleus. Functionally, regulates the expression of selective PPARGC1A/B and ESRRA/B/G target genes with roles in glucose and lipid metabolism, energy transfer, contractile function, muscle mitochondrial biogenesis and oxidative capacity. Required for the efficient induction of MT-CO2, MT-CO3, COX4I1, TFB1M, TFB2M, POLRMT and SIRT3 by PPARGC1A. Positively regulates the PPARGC1A/ESRRG-induced expression of CKMT2, TNNI3 and SLC2A4 and negatively regulates the PPARGC1A/ESRRG-induced expression of PDK4. This Homo sapiens (Human) protein is PGC-1 and ERR-induced regulator in muscle protein 1 (PERM1).